Reading from the N-terminus, the 304-residue chain is Ribosomal protein L11 methyltransferase (304 aa).

Positions 155, 176, 198, and 239 each coordinate S-adenosyl-L-methionine.

Belongs to the methyltransferase superfamily. PrmA family.

The protein localises to the cytoplasm. The enzyme catalyses L-lysyl-[protein] + 3 S-adenosyl-L-methionine = N(6),N(6),N(6)-trimethyl-L-lysyl-[protein] + 3 S-adenosyl-L-homocysteine + 3 H(+). Its function is as follows. Methylates ribosomal protein L11. The protein is Ribosomal protein L11 methyltransferase of Caldicellulosiruptor bescii (strain ATCC BAA-1888 / DSM 6725 / KCTC 15123 / Z-1320) (Anaerocellum thermophilum).